Reading from the N-terminus, the 426-residue chain is Probable serine/threonine-protein kinase PBL2 (426 aa).

A disordered region spans residues 1–54 (MGNCLDSSAKVDNSNHSPHANSASSGSKVSSKTSRSTGPSGLSTTSYSTDSSFG). G2 is lipidated: N-myristoyl glycine. C4 carries the S-palmitoyl cysteine lipid modification. Positions 14–38 (SNHSPHANSASSGSKVSSKTSRSTG) are enriched in low complexity. The span at 39-52 (PSGLSTTSYSTDSS) shows a compositional bias: polar residues. Residue T75 is modified to Phosphothreonine. A Protein kinase domain is found at 86–369 (FRQDNLLGEG…SEVLVTLEQL (284 aa)). Residues 92-100 (LGEGGFGCV) and K124 contribute to the ATP site. At Y169 the chain carries Phosphotyrosine. D219 acts as the Proton acceptor in catalysis. S253 carries the O-UMP-serine modification. S253 bears the Phosphoserine mark. T254 and T259 each carry phosphothreonine. O-UMP-threonine is present on T254. Residue Y267 is modified to Phosphotyrosine. Residues 374–426 (KPGTKHTQMESPRFHHSSVMQKSPVRYSHDRPLLHMTPGASPLPSYTQSPRVR) form a disordered region. The span at 417–426 (PSYTQSPRVR) shows a compositional bias: polar residues.

The protein belongs to the protein kinase superfamily. Ser/Thr protein kinase family. As to quaternary structure, interacts with FLS2. Interacts with the Xanthomonas campestris effector XopAC/AvrAC; the recognition of X.campestris effector XopAC/AvrAC requires the presence of RKS1 and RPP13L4/ZAR1. Component of a stable high-order oligomeric complex made of RKS1 and RPP13L4/ZAR1 which recruits X.campestris effector XopAC/AvrAC-mediated uridylylated PBL2 in the presence of ATP to form a wheel-like pentameric resistosome; this complex triggers immunity toward X.campestris in vascular tissues. Binds to RKS1 when uridylylated. Uridylylated at Ser-253 and Thr-254 by Xanthomonas campestris effector AvrAC/XopAC; this uridylylation is necessary for specific recruitment to RKS1 and to trigger immunity. In terms of tissue distribution, strongly expressed in leaves, moderately in roots, and barely in flowers, mostly in pedicels.

It is found in the cell membrane. Its subcellular location is the nucleus. The catalysed reaction is L-seryl-[protein] + ATP = O-phospho-L-seryl-[protein] + ADP + H(+). It carries out the reaction L-threonyl-[protein] + ATP = O-phospho-L-threonyl-[protein] + ADP + H(+). In terms of biological role, involved in disease resistance signaling. Contributes to pathogen-associated molecular pattern (PAMP)-triggered immunity (PTI) signaling and defense responses downstream of FLS2. Acts as a BIK1 decoy and enables Xanthomonas campestris AvrAC/XopAC detection; X.campestris effector AvrAC/XopAC-mediated uridylylation promotes the formation of a complex with RKS1 and RPP13L4/ZAR1 which, in turn, activates effector-triggered immunity (ETI) against X.campestris. Promotes, when uridylylated by AvrAC/XopAC, the release of ADP from the inactive RKS1-ZAR1 complex, thus activating the resistosome. This is Probable serine/threonine-protein kinase PBL2 from Arabidopsis thaliana (Mouse-ear cress).